We begin with the raw amino-acid sequence, 331 residues long: D-alanine--D-alanine ligase (331 aa).

In terms of domain architecture, ATP-grasp spans 116-316 (KRLWQTHSLP…YEDFVLQLAA (201 aa)). 142-197 (ADRLGLPLIVKPAREGSSIGLTKVTSVAELPAAYEKAARLDRDVMAEQFIDGDELT) provides a ligand contact to ATP. Mg(2+)-binding residues include Asp-269, Glu-283, and Asn-285.

It belongs to the D-alanine--D-alanine ligase family. It depends on Mg(2+) as a cofactor. Mn(2+) is required as a cofactor.

The protein resides in the cytoplasm. It carries out the reaction 2 D-alanine + ATP = D-alanyl-D-alanine + ADP + phosphate + H(+). It participates in cell wall biogenesis; peptidoglycan biosynthesis. In terms of biological role, cell wall formation. The protein is D-alanine--D-alanine ligase of Ralstonia nicotianae (strain ATCC BAA-1114 / GMI1000) (Ralstonia solanacearum).